The following is a 563-amino-acid chain: UvrABC system protein C (563 aa).

Residues 12 to 87 (NKSGVYIFKK…IYKYKPKYNA (76 aa)) enclose the GIY-YIG domain. Positions 194–229 (SNVISFIKLKMEQHARLLDFENAAKYRDILLNFNKV) constitute a UVR domain.

It belongs to the UvrC family. In terms of assembly, interacts with UvrB in an incision complex.

It is found in the cytoplasm. The UvrABC repair system catalyzes the recognition and processing of DNA lesions. UvrC both incises the 5' and 3' sides of the lesion. The N-terminal half is responsible for the 3' incision and the C-terminal half is responsible for the 5' incision. The polypeptide is UvrABC system protein C (Fervidobacterium nodosum (strain ATCC 35602 / DSM 5306 / Rt17-B1)).